A 327-amino-acid chain; its full sequence is Probable cell division protein WhiA (327 aa).

Residues Ser-275 to Arg-308 constitute a DNA-binding region (H-T-H motif).

This sequence belongs to the WhiA family.

Involved in cell division and chromosome segregation. This is Probable cell division protein WhiA from Nocardia farcinica (strain IFM 10152).